A 212-amino-acid chain; its full sequence is HTH-type transcriptional repressor NicS (212 aa).

Positions 14–74 (DRTRDNILKA…SVLEHIYASF (61 aa)) constitute an HTH tetR-type domain. A DNA-binding region (H-T-H motif) is located at residues 37–56 (RIEQISTLAKSNDRMIYYYF).

It participates in cofactor degradation; nicotinate degradation [regulation]. Its function is as follows. Transcriptional repressor for the nicAB operon, encoding the upper aerobic nicotinate degradation pathway. Acts under non-induced conditions: repression of the nicAB operon becomes alleviated in presence of either nicotinate or 6-hydroxynicotinate (6HNA). In Pseudomonas putida (strain ATCC 47054 / DSM 6125 / CFBP 8728 / NCIMB 11950 / KT2440), this protein is HTH-type transcriptional repressor NicS (nicS).